A 356-amino-acid polypeptide reads, in one-letter code: Rhomboid-related protein 1 (356 aa).

7 consecutive transmembrane segments (helical) span residues Trp-107 to Trp-129, Tyr-172 to Ile-194, Lys-201 to Ile-223, Ser-227 to Leu-249, Leu-256 to Ala-275, His-290 to Val-312, and Ile-319 to Val-341. Catalysis depends on Ser-233, which acts as the Nucleophile. His-293 is an active-site residue.

It belongs to the peptidase S54 family.

The protein resides in the membrane. It carries out the reaction Cleaves type-1 transmembrane domains using a catalytic dyad composed of serine and histidine that are contributed by different transmembrane domains.. Its function is as follows. Serine protease which activates lin-3 isoform a in the proximal vulva precursor cells (VPC) during vulva development to transmit the inductive anchor cell signal to the distal VPCs. This Caenorhabditis elegans protein is Rhomboid-related protein 1.